We begin with the raw amino-acid sequence, 1387 residues long: DNA-directed RNA polymerase subunit beta'' (1387 aa).

Zn(2+) is bound by residues Cys224, Cys295, Cys302, and Cys305. The disordered stretch occupies residues 883-903; sequence SHTGKRNDPAGSGLIPDNGSD.

The protein belongs to the RNA polymerase beta' chain family. RpoC2 subfamily. In terms of assembly, in plastids the minimal PEP RNA polymerase catalytic core is composed of four subunits: alpha, beta, beta', and beta''. When a (nuclear-encoded) sigma factor is associated with the core the holoenzyme is formed, which can initiate transcription. Zn(2+) is required as a cofactor.

The protein localises to the plastid. It localises to the chloroplast. The enzyme catalyses RNA(n) + a ribonucleoside 5'-triphosphate = RNA(n+1) + diphosphate. In terms of biological role, DNA-dependent RNA polymerase catalyzes the transcription of DNA into RNA using the four ribonucleoside triphosphates as substrates. The protein is DNA-directed RNA polymerase subunit beta'' of Platanus occidentalis (Sycamore).